Here is a 339-residue protein sequence, read N- to C-terminus: Serine/threonine-protein kinase SAPK2 (339 aa).

Residues 4–260 (YEVIKDIGSG…IPEIKNHPWF (257 aa)) form the Protein kinase domain. ATP contacts are provided by residues 10-18 (IGSGNFGVA) and Lys-33. The Proton acceptor role is filled by Asp-123. The interval 253–339 (EIKNHPWFLK…EDSGDFVCAL (87 aa)) is C-terminal.

The protein belongs to the protein kinase superfamily. Ser/Thr protein kinase family. In terms of processing, phosphorylated.

The catalysed reaction is L-seryl-[protein] + ATP = O-phospho-L-seryl-[protein] + ADP + H(+). It catalyses the reaction L-threonyl-[protein] + ATP = O-phospho-L-threonyl-[protein] + ADP + H(+). May play a role in signal transduction of hyperosmotic response. Can phosphorylate BZIP46 in vitro. This is Serine/threonine-protein kinase SAPK2 (SAPK2) from Oryza sativa subsp. indica (Rice).